The following is a 755-amino-acid chain: E3 ubiquitin-protein ligase TRIM56 (755 aa).

The segment at 21–60 (CKICLEQLRAPKTLPCLHTYCQDCLAQLADGGRVRCPECR) adopts an RING-type zinc-finger fold. 2 B box-type zinc fingers span residues 98 to 149 (KPAC…VVDL) and 164 to 205 (RQAA…CLPL). Zn(2+) contacts are provided by C169, H172, C192, and H197. Residues 216–314 (LEGLLAGVDN…AAAFARRVLS (99 aa)) adopt a coiled-coil conformation. Positions 371-484 (EEQQPQKDGG…SPALGPNLDG (114 aa)) are disordered. Positions 392-404 (SQSRREDEPKTER) are enriched in basic and acidic residues. T418 and T442 each carry phosphothreonine. Over residues 419–447 (PKEEKAQTTREEGAQTLEEDRAQTPHEDG) the composition is skewed to basic and acidic residues. A compositionally biased stretch (basic residues) spans 453-469 (RGGRPNKKKKFKGRLKS). S475 carries the phosphoserine modification.

It belongs to the TRIM/RBCC family. As to quaternary structure, homooligomer. Interacts with STING1. Interacts with TICAM1. In terms of processing, (Microbial infection) Preferentially ubiquitinated with 'Lys-48' and 'Lys-11'-linked ubiquitin chains by Salmonella effector SopA leading to proteasomal targeting and degradation. Post-translationally, autoubiquitinated. In terms of tissue distribution, widely expressed (at protein level).

The protein resides in the cytoplasm. It catalyses the reaction S-ubiquitinyl-[E2 ubiquitin-conjugating enzyme]-L-cysteine + [acceptor protein]-L-lysine = [E2 ubiquitin-conjugating enzyme]-L-cysteine + N(6)-ubiquitinyl-[acceptor protein]-L-lysine.. It functions in the pathway protein modification; protein ubiquitination. E3 ubiquitin-protein ligase that plays a key role in innate antiviral immunity by mediating ubiquitination of CGAS and STING1. In response to pathogen- and host-derived double-stranded DNA (dsDNA), targets STING1 to 'Lys-63'-linked ubiquitination, thereby promoting its homodimerization, a step required for the production of type I interferon IFN-beta. Also mediate monoubiquitination of CGAS, thereby promoting CGAS oligomerization and subsequent activation. Promotes also TNFalpha-induced NF-kappa-B signaling by mediating 'Lys-63'-linked ubiquitination TAK1, leading to enhanced interaction between TAK1 and CHUK/IKKalpha. Independently of its E3 ubiquitin ligase activity, positive regulator of TLR3 signaling. Potentiates extracellular double stranded RNA (dsRNA)-induced expression of IFNB1 and interferon-stimulated genes ISG15, IFIT1/ISG56, CXCL10, OASL and CCL5/RANTES. Promotes establishment of an antiviral state by TLR3 ligand and TLR3-mediated chemokine induction following infection by hepatitis C virus. Acts as a restriction factor of Zika virus through direct interaction with the viral RNA via its C-terminal region. The sequence is that of E3 ubiquitin-protein ligase TRIM56 from Homo sapiens (Human).